Consider the following 206-residue polypeptide: Large ribosomal subunit protein uL4 (206 aa).

It belongs to the universal ribosomal protein uL4 family. In terms of assembly, part of the 50S ribosomal subunit.

One of the primary rRNA binding proteins, this protein initially binds near the 5'-end of the 23S rRNA. It is important during the early stages of 50S assembly. It makes multiple contacts with different domains of the 23S rRNA in the assembled 50S subunit and ribosome. Its function is as follows. Forms part of the polypeptide exit tunnel. The polypeptide is Large ribosomal subunit protein uL4 (Nitrobacter hamburgensis (strain DSM 10229 / NCIMB 13809 / X14)).